Here is a 360-residue protein sequence, read N- to C-terminus: Malate dehydrogenase (360 aa).

This sequence belongs to the LDH2/MDH2 oxidoreductase family. In terms of assembly, homodimer.

It is found in the cytoplasm. The catalysed reaction is (S)-malate + NAD(+) = oxaloacetate + NADH + H(+). This chain is Malate dehydrogenase (mdh), found in Pyrococcus horikoshii (strain ATCC 700860 / DSM 12428 / JCM 9974 / NBRC 100139 / OT-3).